The primary structure comprises 262 residues: Ribose-5-phosphate isomerase A (262 aa).

Substrate-binding positions include 33 to 36 (TGST), 89 to 92 (DGTD), and 102 to 105 (KGGG). The Proton acceptor role is filled by Glu111. Lys129 is a binding site for substrate.

The protein belongs to the ribose 5-phosphate isomerase family. As to quaternary structure, homodimer.

The enzyme catalyses aldehydo-D-ribose 5-phosphate = D-ribulose 5-phosphate. Its pathway is carbohydrate degradation; pentose phosphate pathway; D-ribose 5-phosphate from D-ribulose 5-phosphate (non-oxidative stage): step 1/1. Catalyzes the reversible conversion of ribose-5-phosphate to ribulose 5-phosphate. The polypeptide is Ribose-5-phosphate isomerase A (Jannaschia sp. (strain CCS1)).